A 509-amino-acid polypeptide reads, in one-letter code: Heat shock 70 kDa protein 14 (509 aa).

The protein belongs to the heat shock protein 70 family. In terms of assembly, component of ribosome-associated complex (RAC), a heterodimer composed of Hsp70/DnaK-type chaperone HSPA14 and Hsp40/DnaJ-type chaperone DNAJC2.

It is found in the cytoplasm. The protein localises to the cytosol. Its function is as follows. Component of the ribosome-associated complex (RAC), a complex involved in folding or maintaining nascent polypeptides in a folding-competent state. In the RAC complex, binds to the nascent polypeptide chain, while DNAJC2 stimulates its ATPase activity. This Rattus norvegicus (Rat) protein is Heat shock 70 kDa protein 14 (Hspa14).